The sequence spans 394 residues: LL-diaminopimelate aminotransferase (394 aa).

Substrate contacts are provided by Tyr14 and Gly41. Pyridoxal 5'-phosphate is bound by residues Tyr71, 104 to 105 (AK), Tyr128, Asn174, Tyr205, and 233 to 235 (SFS). Substrate contacts are provided by Lys105, Tyr128, and Asn174. Lys236 bears the N6-(pyridoxal phosphate)lysine mark. Residues Arg244 and Asn275 each contribute to the pyridoxal 5'-phosphate site. The substrate site is built by Asn275 and Arg369.

This sequence belongs to the class-I pyridoxal-phosphate-dependent aminotransferase family. LL-diaminopimelate aminotransferase subfamily. In terms of assembly, homodimer. Pyridoxal 5'-phosphate serves as cofactor.

The enzyme catalyses (2S,6S)-2,6-diaminopimelate + 2-oxoglutarate = (S)-2,3,4,5-tetrahydrodipicolinate + L-glutamate + H2O + H(+). It functions in the pathway amino-acid biosynthesis; L-lysine biosynthesis via DAP pathway; LL-2,6-diaminopimelate from (S)-tetrahydrodipicolinate (aminotransferase route): step 1/1. Functionally, involved in the synthesis of meso-diaminopimelate (m-DAP or DL-DAP), required for both lysine and peptidoglycan biosynthesis. Catalyzes the direct conversion of tetrahydrodipicolinate to LL-diaminopimelate. Is also able to use meso-diaminopimelate, cystathionine, lysine or ornithine as substrates. This chain is LL-diaminopimelate aminotransferase, found in Chlamydia trachomatis serovar D (strain ATCC VR-885 / DSM 19411 / UW-3/Cx).